Consider the following 785-residue polypeptide: Conidiophore development regulator abaA (785 aa).

The tract at residues 1-22 is disordered; sequence MAEWQTECMLPPTQPGFEGVGP. Residues 130 to 204 constitute a DNA-binding region (TEA); it reads GKDGEPVWSD…QVLDSFLKGD (75 aa). The disordered stretch occupies residues 213 to 232; the sequence is EQPADRSNGQPPSAGPRWRN.

It belongs to the TEC1 family.

It localises to the nucleus. Functionally, brlA, abaA and wetA are pivotal regulators of conidiophore development and conidium maturation. They act individually and together to regulate their own expression and that of numerous other sporulation-specific genes. Binds to the sequence 5'-CATTCY-3', where Y is a pyrimidine, making both major- and minor-groove contacts. Controls expression of wetA. The protein is Conidiophore development regulator abaA of Aspergillus oryzae (strain ATCC 42149 / RIB 40) (Yellow koji mold).